We begin with the raw amino-acid sequence, 131 residues long: Large ribosomal subunit protein bL12c (131 aa).

Belongs to the bacterial ribosomal protein bL12 family. As to quaternary structure, homodimer. Part of the ribosomal stalk of the 50S ribosomal subunit. Forms a multimeric L10(L12)X complex, where L10 forms an elongated spine to which 2 to 4 L12 dimers bind in a sequential fashion. Binds GTP-bound translation factors.

It is found in the plastid. The protein localises to the chloroplast. Forms part of the ribosomal stalk which helps the ribosome interact with GTP-bound translation factors. Is thus essential for accurate translation. This chain is Large ribosomal subunit protein bL12c, found in Euglena gracilis.